The primary structure comprises 336 residues: Protein-lysine N-methyltransferase EFM3 (336 aa).

Residues tryptophan 147, 173 to 175 (GTG), aspartate 196, leucine 232, and alanine 251 contribute to the S-adenosyl-L-methionine site.

This sequence belongs to the class I-like SAM-binding methyltransferase superfamily. EEF2KMT family.

It is found in the cytoplasm. S-adenosyl-L-methionine-dependent protein-lysine N-methyltransferase that methylates elongation factor 2. The sequence is that of Protein-lysine N-methyltransferase EFM3 from Chaetomium thermophilum (strain DSM 1495 / CBS 144.50 / IMI 039719) (Thermochaetoides thermophila).